Reading from the N-terminus, the 198-residue chain is Protein GrpE (198 aa).

Residues 1-27 show a composition bias toward basic and acidic residues; sequence MEERNEQVVEETKEAQTEEATIEKNSE. The segment at 1–39 is disordered; the sequence is MEERNEQVVEETKEAQTEEATIEKNSEESVTEEATEETV. Over residues 29–39 the composition is skewed to acidic residues; that stretch reads SVTEEATEETV.

It belongs to the GrpE family. As to quaternary structure, homodimer.

The protein localises to the cytoplasm. In terms of biological role, participates actively in the response to hyperosmotic and heat shock by preventing the aggregation of stress-denatured proteins, in association with DnaK and GrpE. It is the nucleotide exchange factor for DnaK and may function as a thermosensor. Unfolded proteins bind initially to DnaJ; upon interaction with the DnaJ-bound protein, DnaK hydrolyzes its bound ATP, resulting in the formation of a stable complex. GrpE releases ADP from DnaK; ATP binding to DnaK triggers the release of the substrate protein, thus completing the reaction cycle. Several rounds of ATP-dependent interactions between DnaJ, DnaK and GrpE are required for fully efficient folding. In Bacillus cytotoxicus (strain DSM 22905 / CIP 110041 / 391-98 / NVH 391-98), this protein is Protein GrpE.